A 902-amino-acid chain; its full sequence is Gamma-tubulin complex component 2 (902 aa).

Residue Tyr83 is modified to Phosphotyrosine. Residues 875-902 (ERSQKAAPQVPVLRGPPAPAPRVAVTAQ) form a disordered region.

This sequence belongs to the TUBGCP family. As to quaternary structure, component of the gamma-tubulin ring complex (gTuRC) consisting of TUBGCP2, TUBGCP3, TUBGCP4, TUBGCP5 and TUBGCP6 and gamma-tubulin TUBG1 or TUBG2. TUBGCP2, TUBGCP3, TUBGCP4, TUBGCP5 and TUBGCP6 assemble in a 5:5:2:1:1 stoichiometry; each is associated with a gamma-tubulin, thereby arranging 14 gamma-tubulins in a helical manner. Gamma-tubulin at the first position is blocked by TUBGCP3 at the last position, allowing 13 protafilaments to grow into a microtubule. The gTuRC (via TUBGCP3 and TUBGCP6) interacts with ACTB and MZT1; the interactions form a luminal bridge that stabilizes the initial structure during complex assembly. The gTuRC (via TUBGCP2) interacts with MZT2A/MZT2B and CDK5RAP2 (via CM1 motif); the interactions play a role in gTuRC activation. Interacts with ATF5; the ATF5:PCNT:polyglutamylated tubulin (PGT) tripartite unites the mother centriole and the pericentriolar material (PCM) in the centrosome.

The protein localises to the cytoplasm. Its subcellular location is the cytoskeleton. It is found in the microtubule organizing center. It localises to the centrosome. In terms of biological role, component of the gamma-tubulin ring complex (gTuRC) which mediates microtubule nucleation. The gTuRC regulates the minus-end nucleation of alpha-beta tubulin heterodimers that grow into microtubule protafilaments, a critical step in centrosome duplication and spindle formation. Plays a role in neuronal migration. The chain is Gamma-tubulin complex component 2 (TUBGCP2) from Pongo abelii (Sumatran orangutan).